The chain runs to 478 residues: Transcription factor PIF1 (478 aa).

Threonine 10 carries the post-translational modification Phosphothreonine; by CK2. Disordered regions lie at residues 56–80 (LHTK…QPSS), 122–144 (VSQV…PVRN), 172–210 (VRES…GGGA), 230–294 (TSSS…LSER), and 391–478 (TQTH…HTTG). Low complexity predominate over residues 69–80 (LPSMDPQQQPSS). Residues 179–189 (SPSATPSAAAS) show a composition bias toward low complexity. Threonine 197 is subject to Phosphothreonine; by CK2. A Phosphoserine; by CK2 modification is found at serine 202. Composition is skewed to basic and acidic residues over residues 238–272 (SEIE…ETKQ) and 284–294 (RAAEVHNLSER). In terms of domain architecture, bHLH spans 284–333 (RAAEVHNLSERKRRDRINERMKALQELIPRCNKSDKASMLDEAIEYMKSL). Positions 415-426 (PNQQYDPTSGQP) are enriched in polar residues. 4 positions are modified to phosphoserine; by CK2: serine 464, serine 465, serine 466, and serine 469. The span at 465-478 (SSKESEDHGNHTTG) shows a compositional bias: basic and acidic residues.

In terms of assembly, homodimer. Interacts with the photoactivated conformer (Pfr) of phytochromes A and B, PHYA and PHYB. Also interacts with APRR1/TOC1. Binds to RGL2, RGA and FHY3 (via N-terminus). Associates to PTAC12/HMR/PAP5 which acts as a transcriptional coactivator. Binds directly to PCH1 and PCHL; this interaction facilitates its association with phyB and its subsequent light-induced degradation. Post-translationally, phosphorylated at Thr-10, Thr-197, Ser-202, Ser-464, Ser-465, Ser-466 and Ser-469 by CK2. Phosphorylated and ubiquitinated after an exposure to light (especially red and far-red), in a phytochrome-dependent manner. Modified proteins undergo a proteasome-dependent degradation. Its stability and degradation plays a central role in photomorphogenesis of seedlings. In terms of tissue distribution, mainly expressed in leaves, stems and seedlings, and, to a lower extent, in fruits, flowers and roots.

Its subcellular location is the nucleus. Its activity is regulated as follows. DNA-binding ability is inhibited by PCH1 and PCHL to negatively regulate the expressions of its target genes. In terms of biological role, transcription activator. Negatively regulates chlorophyll biosynthesis and seed germination in the dark, and lightinduced degradation of PIF1 relieves this negative regulation to promote photomorphogenesis. Binds to the G-box motif (5'-CACGTG-3') found in many light-regulated promoters. Promotes the expression of SOM, and thus modulates responses to abscisic acid (ABA) and gibberellic acid (GA). The chain is Transcription factor PIF1 from Arabidopsis thaliana (Mouse-ear cress).